The following is a 162-amino-acid chain: Probable chemoreceptor glutamine deamidase CheD (162 aa).

Belongs to the CheD family.

It catalyses the reaction L-glutaminyl-[protein] + H2O = L-glutamyl-[protein] + NH4(+). Functionally, probably deamidates glutamine residues to glutamate on methyl-accepting chemotaxis receptors (MCPs), playing an important role in chemotaxis. The protein is Probable chemoreceptor glutamine deamidase CheD of Pyrococcus horikoshii (strain ATCC 700860 / DSM 12428 / JCM 9974 / NBRC 100139 / OT-3).